We begin with the raw amino-acid sequence, 134 residues long: Flagellar basal-body rod protein FlgC (134 aa).

This sequence belongs to the flagella basal body rod proteins family. In terms of assembly, the basal body constitutes a major portion of the flagellar organelle and consists of four rings (L,P,S, and M) mounted on a central rod. The rod consists of about 26 subunits of FlgG in the distal portion, and FlgB, FlgC and FlgF are thought to build up the proximal portion of the rod with about 6 subunits each.

The protein resides in the bacterial flagellum basal body. This is Flagellar basal-body rod protein FlgC (flgC) from Escherichia coli O157:H7.